Here is a 215-residue protein sequence, read N- to C-terminus: Ribonuclease T (215 aa).

The region spanning 20 to 194 (VVIDVETAGF…YDTMQTAKLF (175 aa)) is the Exonuclease domain. 4 residues coordinate Mg(2+): Asp23, Glu25, His181, and Asp186. Catalysis depends on His181, which acts as the Proton donor/acceptor.

Belongs to the RNase T family. Homodimer. Mg(2+) serves as cofactor.

Functionally, trims short 3' overhangs of a variety of RNA species, leaving a one or two nucleotide 3' overhang. Responsible for the end-turnover of tRNA: specifically removes the terminal AMP residue from uncharged tRNA (tRNA-C-C-A). Also appears to be involved in tRNA biosynthesis. The chain is Ribonuclease T from Yersinia enterocolitica serotype O:8 / biotype 1B (strain NCTC 13174 / 8081).